The following is a 304-amino-acid chain: Acetyl-coenzyme A carboxylase carboxyl transferase subunit beta (304 aa).

Residues 25 to 294 (LWIKCPETGE…KAVKRDTATE (270 aa)) form the CoA carboxyltransferase N-terminal domain.

This sequence belongs to the AccD/PCCB family. Acetyl-CoA carboxylase is a heterohexamer composed of biotin carboxyl carrier protein (AccB), biotin carboxylase (AccC) and two subunits each of ACCase subunit alpha (AccA) and ACCase subunit beta (AccD).

It is found in the cytoplasm. The catalysed reaction is N(6)-carboxybiotinyl-L-lysyl-[protein] + acetyl-CoA = N(6)-biotinyl-L-lysyl-[protein] + malonyl-CoA. Its pathway is lipid metabolism; malonyl-CoA biosynthesis; malonyl-CoA from acetyl-CoA: step 1/1. In terms of biological role, component of the acetyl coenzyme A carboxylase (ACC) complex. Biotin carboxylase (BC) catalyzes the carboxylation of biotin on its carrier protein (BCCP) and then the CO(2) group is transferred by the transcarboxylase to acetyl-CoA to form malonyl-CoA. The protein is Acetyl-coenzyme A carboxylase carboxyl transferase subunit beta of Rhizobium meliloti (strain 1021) (Ensifer meliloti).